A 189-amino-acid polypeptide reads, in one-letter code: Xanthine phosphoribosyltransferase (189 aa).

2 residues coordinate xanthine: Leu20 and Asn27. Ala128–Ala132 contacts 5-phospho-alpha-D-ribose 1-diphosphate. Residue Lys156 coordinates xanthine.

Belongs to the purine/pyrimidine phosphoribosyltransferase family. Xpt subfamily. In terms of assembly, homodimer.

It localises to the cytoplasm. It catalyses the reaction XMP + diphosphate = xanthine + 5-phospho-alpha-D-ribose 1-diphosphate. Its pathway is purine metabolism; XMP biosynthesis via salvage pathway; XMP from xanthine: step 1/1. Converts the preformed base xanthine, a product of nucleic acid breakdown, to xanthosine 5'-monophosphate (XMP), so it can be reused for RNA or DNA synthesis. The polypeptide is Xanthine phosphoribosyltransferase (Pseudomonas savastanoi pv. phaseolicola (strain 1448A / Race 6) (Pseudomonas syringae pv. phaseolicola (strain 1448A / Race 6))).